A 156-amino-acid chain; its full sequence is Ribosomal RNA large subunit methyltransferase H (156 aa).

S-adenosyl-L-methionine contacts are provided by residues Leu73, Gly104, and 123–128 (LSPLTM).

It belongs to the RNA methyltransferase RlmH family. As to quaternary structure, homodimer.

It is found in the cytoplasm. It catalyses the reaction pseudouridine(1915) in 23S rRNA + S-adenosyl-L-methionine = N(3)-methylpseudouridine(1915) in 23S rRNA + S-adenosyl-L-homocysteine + H(+). Functionally, specifically methylates the pseudouridine at position 1915 (m3Psi1915) in 23S rRNA. In Proteus mirabilis (strain HI4320), this protein is Ribosomal RNA large subunit methyltransferase H.